The chain runs to 203 residues: Glycerol-3-phosphate acyltransferase (203 aa).

5 consecutive transmembrane segments (helical) span residues V5–V25, K55–A75, F88–F108, V114–V134, and F162–I182.

It belongs to the PlsY family. In terms of assembly, probably interacts with PlsX.

It is found in the cell inner membrane. It carries out the reaction an acyl phosphate + sn-glycerol 3-phosphate = a 1-acyl-sn-glycero-3-phosphate + phosphate. The protein operates within lipid metabolism; phospholipid metabolism. Its function is as follows. Catalyzes the transfer of an acyl group from acyl-phosphate (acyl-PO(4)) to glycerol-3-phosphate (G3P) to form lysophosphatidic acid (LPA). This enzyme utilizes acyl-phosphate as fatty acyl donor, but not acyl-CoA or acyl-ACP. The sequence is that of Glycerol-3-phosphate acyltransferase from Anaeromyxobacter sp. (strain Fw109-5).